Consider the following 192-residue polypeptide: Imidazole glycerol phosphate synthase subunit HisH (192 aa).

One can recognise a Glutamine amidotransferase type-1 domain in the interval 1–192 (MIVIVDYGLG…QAIQGGFIND (192 aa)). The active-site Nucleophile is the C77. Active-site residues include H169 and E171.

Heterodimer of HisH and HisF.

It is found in the cytoplasm. The enzyme catalyses 5-[(5-phospho-1-deoxy-D-ribulos-1-ylimino)methylamino]-1-(5-phospho-beta-D-ribosyl)imidazole-4-carboxamide + L-glutamine = D-erythro-1-(imidazol-4-yl)glycerol 3-phosphate + 5-amino-1-(5-phospho-beta-D-ribosyl)imidazole-4-carboxamide + L-glutamate + H(+). It catalyses the reaction L-glutamine + H2O = L-glutamate + NH4(+). Its pathway is amino-acid biosynthesis; L-histidine biosynthesis; L-histidine from 5-phospho-alpha-D-ribose 1-diphosphate: step 5/9. In terms of biological role, IGPS catalyzes the conversion of PRFAR and glutamine to IGP, AICAR and glutamate. The HisH subunit catalyzes the hydrolysis of glutamine to glutamate and ammonia as part of the synthesis of IGP and AICAR. The resulting ammonia molecule is channeled to the active site of HisF. The chain is Imidazole glycerol phosphate synthase subunit HisH from Staphylococcus aureus (strain COL).